A 542-amino-acid chain; its full sequence is Nibrin homolog (542 aa).

One can recognise an FHA domain in the interval 25-90 (YKVGRKGCDI…YGTFVKTDLG (66 aa)). The BRCT domain occupies 119–195 (IYRLSLIPLV…KTIILTNWVM (77 aa)). Positions 409–430 (SRGHMDEKNSSDSVTIRRDRND) are disordered. Residues 465–500 (VDFKRFRKGNVTCGNSFSSLIPFAKDPYKEYDSWDV) are involved in MRE11-binding.

The protein belongs to the Nibrin family. In terms of assembly, component of the MRN complex composed of two heterodimers RAD50 and MRE11 associated with a single NBS1.

Its subcellular location is the nucleus. The protein localises to the chromosome. Component of the MRN complex, which plays a central role in double-strand break (DSB) repair, DNA recombination, maintenance of telomere integrity and meiosis. The MRN complex is involved in the repair of DNA double-strand breaks (DSBs) via homologous recombination (HR), an error-free mechanism which primarily occurs during S and G2 phases. The complex (1) mediates the end resection of damaged DNA, which generates proper single-stranded DNA, a key initial steps in HR, and is (2) required for the recruitment of other repair factors and efficient activation of ATM and ATR upon DNA damage. The MRN complex possesses single-strand endonuclease activity and double-strand-specific 3'-5' exonuclease activity, which are provided by MRE11, to initiate end resection, which is required for single-strand invasion and recombination. Within the MRN complex, NBS1 acts as a protein-protein adapter, which specifically recognizes and binds phosphorylated proteins, promoting their recruitment to DNA damage sites. Recruits MRE11 and RAD50 components of the MRN complex to DSBs in response to DNA damage. This is Nibrin homolog from Arabidopsis thaliana (Mouse-ear cress).